The following is an 806-amino-acid chain: Leucine--tRNA ligase (806 aa).

Residues 40–51 (PYPSGTGLHVGH) carry the 'HIGH' region motif. The 'KMSKS' region signature appears at 576–580 (KMSKS). Position 579 (Lys-579) interacts with ATP.

Belongs to the class-I aminoacyl-tRNA synthetase family.

The protein resides in the cytoplasm. It catalyses the reaction tRNA(Leu) + L-leucine + ATP = L-leucyl-tRNA(Leu) + AMP + diphosphate. The protein is Leucine--tRNA ligase of Prosthecochloris aestuarii (strain DSM 271 / SK 413).